The primary structure comprises 550 residues: Glucose-6-phosphate isomerase 2 (550 aa).

E359 functions as the Proton donor in the catalytic mechanism. Active-site residues include H390 and K514.

This sequence belongs to the GPI family.

It is found in the cytoplasm. It catalyses the reaction alpha-D-glucose 6-phosphate = beta-D-fructose 6-phosphate. The protein operates within carbohydrate biosynthesis; gluconeogenesis. Its pathway is carbohydrate degradation; glycolysis; D-glyceraldehyde 3-phosphate and glycerone phosphate from D-glucose: step 2/4. Functionally, catalyzes the reversible isomerization of glucose-6-phosphate to fructose-6-phosphate. The sequence is that of Glucose-6-phosphate isomerase 2 from Streptomyces avermitilis (strain ATCC 31267 / DSM 46492 / JCM 5070 / NBRC 14893 / NCIMB 12804 / NRRL 8165 / MA-4680).